The chain runs to 260 residues: Adenosylcobinamide-GDP ribazoletransferase (260 aa).

7 helical membrane passes run 42–62 (TWALPVAGLLVGLAGALVYKI), 68–88 (LTPNLAALLALATTALITGAL), 118–137 (IGTYGVCALILSFGLRWSAL), 144–166 (WLVTLALCAAHCAARAGVPAFMS), 180–200 (AGAPPGRSVAIAFAVGTLVLT), 201–221 (LALGPGKALVGLILLSLAGLI), and 237–257 (ILGAFEQTGEIVILLVAAAFQ).

The protein belongs to the CobS family. Mg(2+) is required as a cofactor.

The protein localises to the cell inner membrane. It carries out the reaction alpha-ribazole + adenosylcob(III)inamide-GDP = adenosylcob(III)alamin + GMP + H(+). The enzyme catalyses alpha-ribazole 5'-phosphate + adenosylcob(III)inamide-GDP = adenosylcob(III)alamin 5'-phosphate + GMP + H(+). It participates in cofactor biosynthesis; adenosylcobalamin biosynthesis; adenosylcobalamin from cob(II)yrinate a,c-diamide: step 7/7. In terms of biological role, joins adenosylcobinamide-GDP and alpha-ribazole to generate adenosylcobalamin (Ado-cobalamin). Also synthesizes adenosylcobalamin 5'-phosphate from adenosylcobinamide-GDP and alpha-ribazole 5'-phosphate. The protein is Adenosylcobinamide-GDP ribazoletransferase of Bradyrhizobium diazoefficiens (strain JCM 10833 / BCRC 13528 / IAM 13628 / NBRC 14792 / USDA 110).